We begin with the raw amino-acid sequence, 608 residues long: Glutamyl-tRNA(Gln) amidotransferase subunit E (608 aa).

Belongs to the GatB/GatE family. GatE subfamily. Heterodimer of GatD and GatE.

It carries out the reaction L-glutamyl-tRNA(Gln) + L-glutamine + ATP + H2O = L-glutaminyl-tRNA(Gln) + L-glutamate + ADP + phosphate + H(+). Functionally, allows the formation of correctly charged Gln-tRNA(Gln) through the transamidation of misacylated Glu-tRNA(Gln) in organisms which lack glutaminyl-tRNA synthetase. The reaction takes place in the presence of glutamine and ATP through an activated gamma-phospho-Glu-tRNA(Gln). The GatDE system is specific for glutamate and does not act on aspartate. The sequence is that of Glutamyl-tRNA(Gln) amidotransferase subunit E from Pyrobaculum aerophilum (strain ATCC 51768 / DSM 7523 / JCM 9630 / CIP 104966 / NBRC 100827 / IM2).